The following is a 274-amino-acid chain: Glutamate racemase (274 aa).

Substrate-binding positions include 9–10 (DS) and 41–42 (YG). C73 acts as the Proton donor/acceptor in catalysis. 74-75 (NT) provides a ligand contact to substrate. The active-site Proton donor/acceptor is the C183. A substrate-binding site is contributed by 184-185 (TH).

This sequence belongs to the aspartate/glutamate racemases family.

The enzyme catalyses L-glutamate = D-glutamate. It participates in cell wall biogenesis; peptidoglycan biosynthesis. In terms of biological role, provides the (R)-glutamate required for cell wall biosynthesis. The sequence is that of Glutamate racemase from Shewanella baltica (strain OS195).